Reading from the N-terminus, the 125-residue chain is Small ribosomal subunit protein uS12 (125 aa).

3-methylthioaspartic acid is present on Asp-89. The interval 104–125 (LQGVKDRKQSRSKYGSKRPKKA) is disordered. Positions 113 to 125 (SRSKYGSKRPKKA) are enriched in basic residues.

This sequence belongs to the universal ribosomal protein uS12 family. As to quaternary structure, part of the 30S ribosomal subunit. Contacts proteins S8 and S17. May interact with IF1 in the 30S initiation complex.

Its function is as follows. With S4 and S5 plays an important role in translational accuracy. In terms of biological role, interacts with and stabilizes bases of the 16S rRNA that are involved in tRNA selection in the A site and with the mRNA backbone. Located at the interface of the 30S and 50S subunits, it traverses the body of the 30S subunit contacting proteins on the other side and probably holding the rRNA structure together. The combined cluster of proteins S8, S12 and S17 appears to hold together the shoulder and platform of the 30S subunit. This is Small ribosomal subunit protein uS12 from Leptothrix cholodnii (strain ATCC 51168 / LMG 8142 / SP-6) (Leptothrix discophora (strain SP-6)).